The chain runs to 68 residues: Conotoxin tx3b (68 aa).

Residues 1-19 (MSKLGALLTICLLLFSLTA) form the signal peptide. Positions 20–52 (VPLDGDQHADQPAQRLQDRIPTEDHPLFDPNKR) are excised as a propeptide. Cystine bridges form between Cys-53/Cys-67, Cys-54/Cys-63, and Cys-59/Cys-66. Position 61 is a methionine sulfoxide; partial (Met-61). The residue at position 67 (Cys-67) is a Cysteine amide.

As to expression, expressed by the venom duct.

Its subcellular location is the secreted. Intracranial injection into mice causes scratching, hyperactivity and circular motion. In Conus textile (Cloth-of-gold cone), this protein is Conotoxin tx3b.